The sequence spans 252 residues: Pyridoxine 5'-phosphate synthase (252 aa).

Asn7 is a 3-amino-2-oxopropyl phosphate binding site. A 1-deoxy-D-xylulose 5-phosphate-binding site is contributed by Asp9–His10. Arg18 contacts 3-amino-2-oxopropyl phosphate. His43 (proton acceptor) is an active-site residue. 1-deoxy-D-xylulose 5-phosphate-binding residues include Arg45 and His50. Residue Glu70 is the Proton acceptor of the active site. Position 100 (Thr100) interacts with 1-deoxy-D-xylulose 5-phosphate. His190 functions as the Proton donor in the catalytic mechanism. 3-amino-2-oxopropyl phosphate is bound by residues Gly191 and Gly212–His213.

The protein belongs to the PNP synthase family. Homooctamer; tetramer of dimers.

It is found in the cytoplasm. The enzyme catalyses 3-amino-2-oxopropyl phosphate + 1-deoxy-D-xylulose 5-phosphate = pyridoxine 5'-phosphate + phosphate + 2 H2O + H(+). Its pathway is cofactor biosynthesis; pyridoxine 5'-phosphate biosynthesis; pyridoxine 5'-phosphate from D-erythrose 4-phosphate: step 5/5. In terms of biological role, catalyzes the complicated ring closure reaction between the two acyclic compounds 1-deoxy-D-xylulose-5-phosphate (DXP) and 3-amino-2-oxopropyl phosphate (1-amino-acetone-3-phosphate or AAP) to form pyridoxine 5'-phosphate (PNP) and inorganic phosphate. This is Pyridoxine 5'-phosphate synthase from Synechococcus sp. (strain RCC307).